We begin with the raw amino-acid sequence, 205 residues long: Proteasome subunit beta type-3 (205 aa).

It belongs to the peptidase T1B family. As to quaternary structure, the 26S proteasome consists of a 20S proteasome core and two 19S regulatory subunits. The 20S proteasome core is composed of 28 subunits that are arranged in four stacked rings, resulting in a barrel-shaped structure. The two end rings are each formed by seven alpha subunits, and the two central rings are each formed by seven beta subunits. The catalytic chamber with the active sites is on the inside of the barrel.

The protein localises to the cytoplasm. The protein resides in the nucleus. In terms of biological role, non-catalytic component of the proteasome, a multicatalytic proteinase complex which is characterized by its ability to cleave peptides with Arg, Phe, Tyr, Leu, and Glu adjacent to the leaving group at neutral or slightly basic pH. The proteasome has an ATP-dependent proteolytic activity. The polypeptide is Proteasome subunit beta type-3 (PSB3) (Trypanosoma brucei brucei).